Here is a 454-residue protein sequence, read N- to C-terminus: tRNA modification GTPase MnmE (454 aa).

(6S)-5-formyl-5,6,7,8-tetrahydrofolate is bound by residues Arg23, Glu80, and Lys120. One can recognise a TrmE-type G domain in the interval Gly216–Gly377. Asn226 contacts K(+). GTP contacts are provided by residues Asn226–Ser231, Thr245–Thr251, Asp270–Gly273, Asn335–Asp338, and Ser358–Arg360. Position 230 (Ser230) interacts with Mg(2+). K(+) is bound by residues Thr245, Ile247, and Thr250. Residue Thr251 coordinates Mg(2+). Lys454 is a binding site for (6S)-5-formyl-5,6,7,8-tetrahydrofolate.

It belongs to the TRAFAC class TrmE-Era-EngA-EngB-Septin-like GTPase superfamily. TrmE GTPase family. As to quaternary structure, homodimer. Heterotetramer of two MnmE and two MnmG subunits. Requires K(+) as cofactor.

Its subcellular location is the cytoplasm. Functionally, exhibits a very high intrinsic GTPase hydrolysis rate. Involved in the addition of a carboxymethylaminomethyl (cmnm) group at the wobble position (U34) of certain tRNAs, forming tRNA-cmnm(5)s(2)U34. The protein is tRNA modification GTPase MnmE of Klebsiella pneumoniae (strain 342).